The sequence spans 255 residues: Flagellar brake protein YcgR (255 aa).

The PilZ domain occupies 130–245; it reads QRREHFRVPL…MAAHLQRFVM (116 aa).

This sequence belongs to the YcgR family. In terms of assembly, monomer. Interacts with the flagellar basal bodies.

It localises to the bacterial flagellum basal body. Acts as a flagellar brake, regulating swimming and swarming in a bis-(3'-5') cyclic diguanylic acid (c-di-GMP)-dependent manner. Binds 1 c-di-GMP dimer per subunit. Increasing levels of c-di-GMP lead to decreased motility. The chain is Flagellar brake protein YcgR from Thiobacillus denitrificans (strain ATCC 25259 / T1).